A 152-amino-acid polypeptide reads, in one-letter code: Endoribonuclease YbeY (152 aa).

The Zn(2+) site is built by His-113, His-117, and His-123.

This sequence belongs to the endoribonuclease YbeY family. The cofactor is Zn(2+).

It is found in the cytoplasm. Its function is as follows. Single strand-specific metallo-endoribonuclease involved in late-stage 70S ribosome quality control and in maturation of the 3' terminus of the 16S rRNA. In Pseudoalteromonas atlantica (strain T6c / ATCC BAA-1087), this protein is Endoribonuclease YbeY.